Consider the following 242-residue polypeptide: Tryptophan synthase alpha chain (242 aa).

Active-site proton acceptor residues include Glu32 and Asp43.

The protein belongs to the TrpA family. In terms of assembly, tetramer of two alpha and two beta chains.

The protein resides in the plastid. The protein localises to the chloroplast. The catalysed reaction is (1S,2R)-1-C-(indol-3-yl)glycerol 3-phosphate + L-serine = D-glyceraldehyde 3-phosphate + L-tryptophan + H2O. The protein operates within amino-acid biosynthesis; L-tryptophan biosynthesis; L-tryptophan from chorismate: step 5/5. Its function is as follows. The alpha subunit is responsible for the aldol cleavage of indoleglycerol phosphate to indole and glyceraldehyde 3-phosphate. This chain is Tryptophan synthase alpha chain, found in Cyanidium caldarium (Red alga).